Here is a 466-residue protein sequence, read N- to C-terminus: Argininosuccinate lyase (466 aa).

3 residues coordinate 2-(N(omega)-L-arginino)succinate: serine 27, asparagine 114, and threonine 159. Residue histidine 160 is the Proton acceptor of the active site. Serine 281 (proton donor) is an active-site residue. 2-(N(omega)-L-arginino)succinate-binding residues include asparagine 289, tyrosine 321, glutamine 326, and lysine 329.

It belongs to the lyase 1 family. Argininosuccinate lyase subfamily. Homotetramer. As to expression, eye lens.

The enzyme catalyses 2-(N(omega)-L-arginino)succinate = fumarate + L-arginine. The protein operates within amino-acid biosynthesis; L-arginine biosynthesis; L-arginine from L-ornithine and carbamoyl phosphate: step 3/3. In terms of biological role, delta crystallin, the principal crystallin in embryonic lens, is found only in birds and reptiles. This protein may also function as an enzymatically active argininosuccinate lyase. In Gallus gallus (Chicken), this protein is Argininosuccinate lyase (ASL2).